The primary structure comprises 203 residues: Thymidine kinase (203 aa).

Residues Gly21–Thr28 and Asp99–Gln102 each bind ATP. Glu100 acts as the Proton acceptor in catalysis. Zn(2+) contacts are provided by Cys156, Cys159, Cys194, and Cys197.

The protein belongs to the thymidine kinase family. Homotetramer.

The protein localises to the cytoplasm. The enzyme catalyses thymidine + ATP = dTMP + ADP + H(+). This chain is Thymidine kinase, found in Mesoplasma florum (strain ATCC 33453 / NBRC 100688 / NCTC 11704 / L1) (Acholeplasma florum).